Consider the following 553-residue polypeptide: Glucagon-like peptide 2 receptor (553 aa).

Topologically, residues 1–173 (MKLGSSRAGP…SFKQNVDRYA (173 aa)) are extracellular. 3 disulfide bridges follow: C83–C105, C96–C137, and C118–C159. N-linked (GlcNAc...) asparagine glycans are attached at residues N97, N113, N148, and N162. A helical transmembrane segment spans residues 174–198 (LLSTLQLMYTVGYSFSLISLFLALT). The Cytoplasmic segment spans residues 199–210 (LLLFLRKLHCTR). Residues 211-235 (NYIHMNLFASFILRTLAVLVKDVVF) form a helical membrane-spanning segment. At 236-261 (YNSYSKRPDNENGWMSYLSEMSTSCR) the chain is on the extracellular side. The helical transmembrane segment at 262–285 (SVQVLLHYFVGANYLWLLVEGLYL) threads the bilayer. Residues 286–299 (HTLLEPTVLPERRL) lie on the Cytoplasmic side of the membrane. Residues 300-321 (WPRYLLLGWAFPVLFVVPWGFA) form a helical membrane-spanning segment. Over 322-339 (RAHLENTGCWTTNGNKKI) the chain is Extracellular. A helical membrane pass occupies residues 340-362 (WWIIRGPMMLCVTVNFFIFLKIL). Topologically, residues 363-386 (KLLISKLKAHQMCFRDYKYRLAKS) are cytoplasmic. A helical membrane pass occupies residues 387 to 405 (TLVLIPLLGVHEILFSFIT). Residues 406–417 (DDQVEGFAKLIR) are Extracellular-facing. The helical transmembrane segment at 418 to 438 (LFIQLTLSSFHGFLVALQYGF) threads the bilayer. Over 439-550 (ANGEVKAELR…ANTMEEILEE (112 aa)) the chain is Cytoplasmic.

Belongs to the G-protein coupled receptor 2 family.

The protein resides in the cell membrane. In terms of biological role, this is a receptor for glucagon-like peptide 2. The activity of this receptor is mediated by G proteins which activate adenylyl cyclase. The sequence is that of Glucagon-like peptide 2 receptor (GLP2R) from Homo sapiens (Human).